The following is a 700-amino-acid chain: Polyribonucleotide nucleotidyltransferase (700 aa).

Mg(2+) is bound by residues aspartate 491 and aspartate 497. Positions proline 558–isoleucine 617 constitute a KH domain. One can recognise an S1 motif domain in the interval glycine 627 to lysine 695.

Belongs to the polyribonucleotide nucleotidyltransferase family. As to quaternary structure, component of the RNA degradosome, which is a multiprotein complex involved in RNA processing and mRNA degradation. Mg(2+) is required as a cofactor.

The protein localises to the cytoplasm. The enzyme catalyses RNA(n+1) + phosphate = RNA(n) + a ribonucleoside 5'-diphosphate. In terms of biological role, involved in mRNA degradation. Catalyzes the phosphorolysis of single-stranded polyribonucleotides processively in the 3'- to 5'-direction. The protein is Polyribonucleotide nucleotidyltransferase of Psychrobacter cryohalolentis (strain ATCC BAA-1226 / DSM 17306 / VKM B-2378 / K5).